Here is a 42-residue protein sequence, read N- to C-terminus: Photosystem I reaction center subunit IX (42 aa).

A helical membrane pass occupies residues 7–27; that stretch reads FLSLGPVLLVLWLSVQATLLI.

Belongs to the PsaJ family.

The protein localises to the cellular thylakoid membrane. Functionally, may help in the organization of the PsaE and PsaF subunits. The sequence is that of Photosystem I reaction center subunit IX from Gloeothece citriformis (strain PCC 7424) (Cyanothece sp. (strain PCC 7424)).